The following is a 1670-amino-acid chain: Hemolymph clottable protein (1670 aa).

Positions 1–14 are cleaved as a signal peptide; that stretch reads MKALILLLLGACQA. Positions 15–674 are vittelogenin; that stretch reads LQPGLEYQYR…FANFVTTTIY (660 aa). Positions 15–764 constitute a Vitellogenin domain; that stretch reads LQPGLEYQYR…LKIDGQQRGL (750 aa). The N-linked (GlcNAc...) asparagine glycan is linked to Asn-106. A compositionally biased stretch (low complexity) spans 198–231; the sequence is SSYTTKTKSKTSSKTSSKTSSKTSSKTSKTGKTS. Residues 198–236 are disordered; it reads SSYTTKTKSKTSSKTSSKTSSKTSSKTSKTGKTSPGQLA. N-linked (GlcNAc...) asparagine glycosylation is found at Asn-319, Asn-459, and Asn-1301. Residues 1390 to 1550 form the VWFD domain; the sequence is VSCTIDETKV…SWASPGEGCA (161 aa). Intrachain disulfides connect Cys-1392–Cys-1513 and Cys-1414–Cys-1549.

Homodimer; disulfide-linked. Also exists as oligomers. Post-translationally, glycosylated. Contains mannose and N-acetylglucosamine. In terms of processing, substrate of transglutaminase. In terms of tissue distribution, widely expressed with highest levels in gill and heart. Not expressed in hemocytes.

Its subcellular location is the secreted. Its function is as follows. Forms stable clots in the presence of calcium. This Penaeus monodon (Giant tiger prawn) protein is Hemolymph clottable protein.